Reading from the N-terminus, the 153-residue chain is Aspartate carbamoyltransferase regulatory chain (153 aa).

Cys-109, Cys-114, Cys-138, and Cys-141 together coordinate Zn(2+).

Belongs to the PyrI family. As to quaternary structure, contains catalytic and regulatory chains. Zn(2+) is required as a cofactor.

Its function is as follows. Involved in allosteric regulation of aspartate carbamoyltransferase. The chain is Aspartate carbamoyltransferase regulatory chain from Vibrio parahaemolyticus serotype O3:K6 (strain RIMD 2210633).